The primary structure comprises 584 residues: A-type ATP synthase subunit A (584 aa).

233–240 (GPFGSGKT) is an ATP binding site.

Belongs to the ATPase alpha/beta chains family. Has multiple subunits with at least A(3), B(3), C, D, E, F, H, I and proteolipid K(x).

Its subcellular location is the cell membrane. The enzyme catalyses ATP + H2O + 4 H(+)(in) = ADP + phosphate + 5 H(+)(out). In terms of biological role, component of the A-type ATP synthase that produces ATP from ADP in the presence of a proton gradient across the membrane. The A chain is the catalytic subunit. The protein is A-type ATP synthase subunit A of Methanothermobacter thermautotrophicus (strain ATCC 29096 / DSM 1053 / JCM 10044 / NBRC 100330 / Delta H) (Methanobacterium thermoautotrophicum).